We begin with the raw amino-acid sequence, 404 residues long: LL-diaminopimelate aminotransferase (404 aa).

Substrate-binding residues include Tyr15 and Gly42. Residues Tyr72, 108–109 (AK), Tyr132, Asn188, Tyr219, and 247–249 (SFS) contribute to the pyridoxal 5'-phosphate site. Substrate-binding residues include Lys109, Tyr132, and Asn188. N6-(pyridoxal phosphate)lysine is present on Lys250. The pyridoxal 5'-phosphate site is built by Arg258 and Asn288. Substrate contacts are provided by Asn288 and Arg384.

It belongs to the class-I pyridoxal-phosphate-dependent aminotransferase family. LL-diaminopimelate aminotransferase subfamily. In terms of assembly, homodimer. It depends on pyridoxal 5'-phosphate as a cofactor.

It carries out the reaction (2S,6S)-2,6-diaminopimelate + 2-oxoglutarate = (S)-2,3,4,5-tetrahydrodipicolinate + L-glutamate + H2O + H(+). Its pathway is amino-acid biosynthesis; L-lysine biosynthesis via DAP pathway; LL-2,6-diaminopimelate from (S)-tetrahydrodipicolinate (aminotransferase route): step 1/1. Functionally, involved in the synthesis of meso-diaminopimelate (m-DAP or DL-DAP), required for both lysine and peptidoglycan biosynthesis. Catalyzes the direct conversion of tetrahydrodipicolinate to LL-diaminopimelate. This is LL-diaminopimelate aminotransferase from Lachnoclostridium phytofermentans (strain ATCC 700394 / DSM 18823 / ISDg) (Clostridium phytofermentans).